Consider the following 231-residue polypeptide: Female protein (231 aa).

Residues 1 to 19 (MDKMLLLLGVSILLSEVFA) form the signal peptide. The Pentraxin (PTX) domain maps to 24-223 (TGKVFVFPRE…YAVIRPRCVA (200 aa)). Asn51 carries N-linked (GlcNAc...) asparagine glycosylation. The cysteines at positions 55 and 114 are disulfide-linked. Positions 77, 78, 155, 156, 157, and 167 each coordinate Ca(2+).

It belongs to the pentraxin family. As to quaternary structure, homopentamer. Pentraxin (or pentaxin) have a discoid arrangement of 5 non-covalently bound subunits. The cofactor is Ca(2+).

It is found in the secreted. In Nothocricetulus migratorius (Gray dwarf hamster), this protein is Female protein.